We begin with the raw amino-acid sequence, 269 residues long: 3-methyl-2-oxobutanoate hydroxymethyltransferase (269 aa).

2 residues coordinate Mg(2+): D43 and D82. 3-methyl-2-oxobutanoate is bound by residues 43-44 (DS), D82, and K110. Position 112 (E112) interacts with Mg(2+). E179 serves as the catalytic Proton acceptor.

It belongs to the PanB family. As to quaternary structure, homodecamer; pentamer of dimers. Requires Mg(2+) as cofactor.

The protein localises to the cytoplasm. It catalyses the reaction 3-methyl-2-oxobutanoate + (6R)-5,10-methylene-5,6,7,8-tetrahydrofolate + H2O = 2-dehydropantoate + (6S)-5,6,7,8-tetrahydrofolate. The protein operates within cofactor biosynthesis; (R)-pantothenate biosynthesis; (R)-pantoate from 3-methyl-2-oxobutanoate: step 1/2. Functionally, catalyzes the reversible reaction in which hydroxymethyl group from 5,10-methylenetetrahydrofolate is transferred onto alpha-ketoisovalerate to form ketopantoate. The polypeptide is 3-methyl-2-oxobutanoate hydroxymethyltransferase (Acinetobacter baylyi (strain ATCC 33305 / BD413 / ADP1)).